The sequence spans 1039 residues: Alpha-mannosidase 2C1 (1039 aa).

The Co(2+) site is built by His259, Asp261, Asp371, and His576. Asp371 serves as the catalytic Nucleophile.

Belongs to the glycosyl hydrolase 38 family. Co(2+) serves as cofactor. In terms of tissue distribution, expressed in kidney and liver (at protein level). Widely expressed, with highest levels in lung, ovary and testis. Also detected at lower levels in heart, brain, liver, spleen, kidney and thymus.

It is found in the cytoplasm. The catalysed reaction is Hydrolysis of terminal, non-reducing alpha-D-mannose residues in alpha-D-mannosides.. Its activity is regulated as follows. Inhibited by 1,4-dideoxy-1,4-imino-d-mannitol (DIM) and EDTA. Its function is as follows. Cleaves alpha 1,2-, alpha 1,3-, and alpha 1,6-linked mannose residues from glycoproteins. Involved in the degradation of free oligosaccharides in the cytoplasm. The polypeptide is Alpha-mannosidase 2C1 (Mus musculus (Mouse)).